We begin with the raw amino-acid sequence, 383 residues long: Acetylornithine deacetylase (383 aa).

Histidine 80 contributes to the Zn(2+) binding site. The active site involves aspartate 82. Aspartate 112 is a binding site for Zn(2+). Glutamate 144 is an active-site residue. Zn(2+) contacts are provided by glutamate 145, glutamate 169, and histidine 355.

It belongs to the peptidase M20A family. ArgE subfamily. Homodimer. Zn(2+) serves as cofactor. It depends on Co(2+) as a cofactor. Requires glutathione as cofactor.

The protein resides in the cytoplasm. It carries out the reaction N(2)-acetyl-L-ornithine + H2O = L-ornithine + acetate. It participates in amino-acid biosynthesis; L-arginine biosynthesis; L-ornithine from N(2)-acetyl-L-ornithine (linear): step 1/1. In terms of biological role, catalyzes the hydrolysis of the amide bond of N(2)-acetylated L-amino acids. Cleaves the acetyl group from N-acetyl-L-ornithine to form L-ornithine, an intermediate in L-arginine biosynthesis pathway, and a branchpoint in the synthesis of polyamines. The chain is Acetylornithine deacetylase from Shigella sonnei (strain Ss046).